The following is a 472-amino-acid chain: Protein c-ets-2-B (472 aa).

One can recognise a PNT domain in the interval 85-170; the sequence is DTFNGFAKER…EHLEEMMKEY (86 aa). Residues 366 to 446 constitute a DNA-binding region (ETS); sequence IQLWQFLLEL…SGKRYVYRFV (81 aa).

It belongs to the ETS family.

The protein resides in the nucleus. Probable transcription factor. The chain is Protein c-ets-2-B (ets2-b) from Xenopus laevis (African clawed frog).